We begin with the raw amino-acid sequence, 285 residues long: Pantothenate synthetase (285 aa).

ATP is bound at residue 30-37 (MGYLHAGH). The active-site Proton donor is His37. Position 61 (Gln61) interacts with (R)-pantoate. Position 61 (Gln61) interacts with beta-alanine. Residue 147–150 (GQKD) coordinates ATP. A (R)-pantoate-binding site is contributed by Gln153. ATP is bound by residues Val176 and 184 to 187 (LSSR).

It belongs to the pantothenate synthetase family. As to quaternary structure, homodimer.

Its subcellular location is the cytoplasm. It catalyses the reaction (R)-pantoate + beta-alanine + ATP = (R)-pantothenate + AMP + diphosphate + H(+). The protein operates within cofactor biosynthesis; (R)-pantothenate biosynthesis; (R)-pantothenate from (R)-pantoate and beta-alanine: step 1/1. Its function is as follows. Catalyzes the condensation of pantoate with beta-alanine in an ATP-dependent reaction via a pantoyl-adenylate intermediate. The polypeptide is Pantothenate synthetase (Solidesulfovibrio magneticus (strain ATCC 700980 / DSM 13731 / RS-1) (Desulfovibrio magneticus)).